Consider the following 364-residue polypeptide: 1-acyl-sn-glycerol-3-phosphate acyltransferase epsilon (364 aa).

Helical transmembrane passes span 15–35 (LLPSVVLLGTAPTYVLAWGVW) and 61–81 (MVLFFFENYTGVQILLYGDLP). Positions 93-98 (HQSTVD) match the HXXXXD motif motif. A helical membrane pass occupies residues 344 to 364 (LYVNTWIYGTLLGCLWVTIKA).

This sequence belongs to the 1-acyl-sn-glycerol-3-phosphate acyltransferase family. In terms of tissue distribution, widely expressed.

The protein resides in the endoplasmic reticulum membrane. The protein localises to the nucleus envelope. It is found in the mitochondrion. The catalysed reaction is a 1-acyl-sn-glycero-3-phosphate + an acyl-CoA = a 1,2-diacyl-sn-glycero-3-phosphate + CoA. The enzyme catalyses 1-(9Z-octadecenoyl)-sn-glycero-3-phosphate + tetradecanoyl-CoA = 1-(9Z)-octadecenoyl-2-tetradecanoyl-sn-glycero-3-phosphate + CoA. It catalyses the reaction pentadecanoyl-CoA + 1-(9Z-octadecenoyl)-sn-glycero-3-phosphate = 1-(9Z)-octadecenoyl-2-pentadecanoyl-sn-glycero-3-phosphate + CoA. It carries out the reaction 1-(9Z-octadecenoyl)-sn-glycero-3-phosphate + octadecanoyl-CoA = 1-(9Z-octadecenoyl)-2-octadecanoyl-sn-glycero-3-phosphate + CoA. The catalysed reaction is nonadecanoyl-CoA + 1-(9Z-octadecenoyl)-sn-glycero-3-phosphate = 1-(9Z)-octadecenoyl-2-nonadecanoyl-sn-glycero-3-phosphate + CoA. The enzyme catalyses 1-(9Z-octadecenoyl)-sn-glycero-3-phosphoethanolamine + (9Z)-octadecenoyl-CoA = 1,2-di-(9Z-octadecenoyl)-sn-glycero-3-phosphoethanolamine + CoA. It catalyses the reaction 1-(9Z-octadecenoyl)-sn-glycero-3-phosphocholine + (9Z)-octadecenoyl-CoA = 1,2-di-(9Z-octadecenoyl)-sn-glycero-3-phosphocholine + CoA. It carries out the reaction 1-(9Z-octadecenoyl)-sn-glycero-3-phospho-(1D-myo-inositol) + (5Z,8Z,11Z,14Z)-eicosatetraenoyl-CoA = 1-(9Z-octadecenoyl)-2-(5Z,8Z,11Z,14Z-eicosatetraenoyl)-sn-glycero-3-phospho-1D-myo-inositol + CoA. The catalysed reaction is 1-(9Z-octadecenoyl)-sn-glycero-3-phospho-L-serine + (9Z)-octadecenoyl-CoA = 1,2-di-(9Z)-octadecenoyl-sn-glycero-3-phospho-L-serine + CoA. The enzyme catalyses 1-(9Z-octadecenoyl)-sn-glycero-3-phospho-L-serine + (5Z,8Z,11Z,14Z)-eicosatetraenoyl-CoA = 1-(9Z-octadecenoyl)-2-(5Z,8Z,11Z,14Z-eicosatetraenoyl)-sn-glycero-3-phospho-L-serine + CoA. It catalyses the reaction 1-hexadecanoyl-sn-glycero-3-phosphate + (9Z)-octadecenoyl-CoA = 1-hexadecanoyl-2-(9Z-octadecenoyl)-sn-glycero-3-phosphate + CoA. It carries out the reaction 1-heptadecanoyl-sn-glycero-3-phosphate + (9Z)-octadecenoyl-CoA = 1-heptadecanoyl-2-(9Z)-octadecenoyl-sn-glycero-3-phosphate + CoA. The catalysed reaction is 1-(5Z,8Z,11Z,14Z-eicosatetraenoyl)-sn-glycero-3-phosphate + (9Z)-octadecenoyl-CoA = 1-(5Z,8Z,11Z,14Z)-eicosatetraenoyl-2-(9Z)-octadecenoyl-sn-glycero-3-phosphate + CoA. The enzyme catalyses 1-octadecanoyl-sn-glycero-3-phosphate + (9Z)-octadecenoyl-CoA = 1-octadecanoyl-2-(9Z-octadecenoyl)-sn-glycero-3-phosphate + CoA. It catalyses the reaction 1-(9Z-octadecenoyl)-sn-glycero-3-phosphate + (5Z,8Z,11Z,14Z)-eicosatetraenoyl-CoA = 1-(9Z)-octadecenoyl-2-(5Z,8Z,11Z,14Z)-eicosatetraenoyl-sn-glycero-3-phosphate + CoA. It carries out the reaction heptadecanoyl-CoA + 1-(9Z-octadecenoyl)-sn-glycero-3-phosphate = 1-(9Z)-octadecenoyl-2-heptadecanoyl-sn-glycero-3-phosphate + CoA. The catalysed reaction is 1-(9Z-octadecenoyl)-sn-glycero-3-phosphocholine + (5Z,8Z,11Z,14Z)-eicosatetraenoyl-CoA = 1-(9Z)-octadecenoyl-2-(5Z,8Z,11Z,14Z)-icosatetraenoyl-sn-glycero-3-phosphocholine + CoA. The enzyme catalyses 1-(9Z-octadecenoyl)-sn-glycero-3-phosphate + (9Z)-octadecenoyl-CoA = 1,2-di-(9Z-octadecenoyl)-sn-glycero-3-phosphate + CoA. It catalyses the reaction 1-(9Z-octadecenoyl)-sn-glycero-3-phosphate + hexadecanoyl-CoA = 1-hexadecanoyl-2-(9Z-octadecenoyl)-sn-glycero-3-phosphate + CoA. It participates in phospholipid metabolism; CDP-diacylglycerol biosynthesis; CDP-diacylglycerol from sn-glycerol 3-phosphate: step 2/3. Converts 1-acyl-sn-glycerol-3-phosphate (lysophosphatidic acid or LPA) into 1,2-diacyl-sn-glycerol-3-phosphate (phosphatidic acid or PA) by incorporating an acyl moiety at the sn-2 position of the glycerol backbone. Acts on LPA containing saturated or unsaturated fatty acids C15:0-C20:4 at the sn-1 position using C18:1-CoA as the acyl donor. Also acts on lysophosphatidylethanolamine using oleoyl-CoA, but not arachidonoyl-CoA, and lysophosphatidylinositol using arachidonoyl-CoA, but not oleoyl-CoA. Activity toward lysophosphatidylglycerol not detectable. This is 1-acyl-sn-glycerol-3-phosphate acyltransferase epsilon (AGPAT5) from Homo sapiens (Human).